The sequence spans 873 residues: MASRRKSTTPCMVLASEQDPDLELISDLDEGPPILTPVENAKAESVSSDEEVHGSVDSDNQQNKKVEGGYECKYCTFQTPDLNMFTFHVDSEHPNVVLNSSYVCVECNFLTKRYDALSEHNLKYHPGEENFKLTMVKRNNQTIFEQTINDLTFDGSFVKEENTEQGESIDVSSSGISISKTPIMKMMKNKVENKRITVHHNSAEGTSEEKENGVKASQEENAESVSSSALESNTSTSTINRVHPSPASTVVTPTAVLPGLAQVITAVSAQQNSNLLPKVLIPVNSIPTYNAALDNNPLLLNTYNKFPYPTMSEITVLSAQAKYTEEQIKIWFSAQRLKHGVSWTPEEVEEARRKQFNGTVHTVPQTITVIPTHISTGSNGLPSILQTCQIVGQPGLVLTQVAGTNTLPVTAPIALTVAGVPNQTNVQKSQVPAAQPATDTKPATAAVPSSPSVRPEAALVNPDSFGIRAKKTKEQLAELKVSYLKNQFPHDSEIIRLMKITGLTKGEIKKWFSDTRYNQRNSKSNQCLHLNNDSSATIIIDSSDETPEPPAAAASQQKQSWNPFPDFAPQKFKEKTAEQLRALQASFLNSSVLTDEEVNRLRAQTKLTRREIDAWFTEKNKTKALKDEKIEVDESNVGSSKEEPGESSPGDETVAPKSGGTGKICKKTPEQLHMLKSAFVRTQWPSAEEYDKLAEESGLARTDIVSWFGDTRYAWKNGNLKWYYYYQSSNSSSLNGLSSLRRRGRGRPKGRGRGRPRGRPRGGKRMNTWDRVPSLIKFKTGTAILKDYYLKHKFLNEQDLDELVNRSHMGYEQVREWFAERQRRSELGIELFEENEEEDEVVDDQEEDEEETDDSDTWEPPRHVKRKLSKSDD.

Thr36 bears the Phosphothreonine mark. A disordered region spans residues 41–63 (AKAESVSSDEEVHGSVDSDNQQN). Residues Ser45, Ser47, and Ser48 each carry the phosphoserine modification. Residues 50–63 (EEVHGSVDSDNQQN) are compositionally biased toward basic and acidic residues. 2 C2H2-type zinc fingers span residues 70–93 (YECK…DSEH) and 102–125 (YVCV…LKYH). Residue Lys159 forms a Glycyl lysine isopeptide (Lys-Gly) (interchain with G-Cter in SUMO2) linkage. Residues 198–247 (VHHNSAEGTSEEKENGVKASQEENAESVSSSALESNTSTSTINRVHPSPA) are disordered. Ser202 is modified (phosphoserine). The segment covering 223-238 (ESVSSSALESNTSTST) has biased composition (low complexity). The segment at 272 to 432 (NSNLLPKVLI…QTNVQKSQVP (161 aa)) is required for dimerization. The interval 272–564 (NSNLLPKVLI…SQQKQSWNPF (293 aa)) is required for interaction with NFYA. The segment at residues 284 to 346 (NSIPTYNAAL…LKHGVSWTPE (63 aa)) is a DNA-binding region (homeobox 1). Residues 429-456 (SQVPAAQPATDTKPATAAVPSSPSVRPE) are disordered. Residues Lys441 and Lys485 each participate in a glycyl lysine isopeptide (Lys-Gly) (interchain with G-Cter in SUMO2) cross-link. The segment at residues 464–526 (SFGIRAKKTK…YNQRNSKSNQ (63 aa)) is a DNA-binding region (homeobox 2). Disordered regions lie at residues 541–568 (DSSD…PDFA), 627–668 (DEKI…CKKT), and 731–767 (SSSL…KRMN). The segment at residues 569 to 630 (PQKFKEKTAE…KTKALKDEKI (62 aa)) is a DNA-binding region (homeobox 3). Lys629 participates in a covalent cross-link: Glycyl lysine isopeptide (Lys-Gly) (interchain with G-Cter in SUMO2). At Ser648 the chain carries Phosphoserine. The homeobox 4 DNA-binding region spans 660 to 722 (GTGKICKKTP…YAWKNGNLKW (63 aa)). Positions 734–768 (LNGLSSLRRRGRGRPKGRGRGRPRGRPRGGKRMNT) are required for nuclear localization. Positions 740 to 764 (LRRRGRGRPKGRGRGRPRGRPRGGK) are enriched in basic residues. A Phosphoserine modification is found at Ser774. Residues 777–832 (KFKTGTAILKDYYLKHKFLNEQDLDELVNRSHMGYEQVREWFAERQRRSELGIELF) constitute a DNA-binding region (homeobox 5). The disordered stretch occupies residues 829–873 (IELFEENEEEDEVVDDQEEDEEETDDSDTWEPPRHVKRKLSKSDD). Acidic residues predominate over residues 831-857 (LFEENEEEDEVVDDQEEDEEETDDSDT). Positions 831–873 (LFEENEEEDEVVDDQEEDEEETDDSDTWEPPRHVKRKLSKSDD) are required for repressor activity. Over residues 863 to 873 (HVKRKLSKSDD) the composition is skewed to basic residues.

The protein belongs to the ZHX family. In terms of assembly, forms homodimers. Heterodimer (via HD1 domain) with ZHX2 (via HD1 domain). Also forms a heterodimer with ZHX3 which is a prerequisite for repressor activity. Interacts with ATF7IP and NFYA. Interacts (via homeobox domains) with DNMT3B (via PWWP domain). In terms of tissue distribution, widely expressed with highest levels in brain.

It is found in the nucleus. Its function is as follows. Acts as a transcriptional repressor. Increases DNMT3B-mediated repressive transcriptional activity when DNMT3B is tethered to DNA. May link molecule between DNMT3B and other co-repressor proteins. The polypeptide is Zinc fingers and homeoboxes protein 1 (Zhx1) (Mus musculus (Mouse)).